Here is a 183-residue protein sequence, read N- to C-terminus: Transcription factor E (183 aa).

One can recognise an HTH TFE/IIEalpha-type domain in the interval tyrosine 4 to arginine 97.

This sequence belongs to the TFE family. As to quaternary structure, monomer. Interaction with RNA polymerase subunits RpoF and RpoE is necessary for Tfe stimulatory transcription activity. Able to interact with Tbp and RNA polymerase in the absence of DNA promoter. Interacts both with the preinitiation and elongation complexes.

Its function is as follows. Transcription factor that plays a role in the activation of archaeal genes transcribed by RNA polymerase. Facilitates transcription initiation by enhancing TATA-box recognition by TATA-box-binding protein (Tbp), and transcription factor B (Tfb) and RNA polymerase recruitment. Not absolutely required for transcription in vitro, but particularly important in cases where Tbp or Tfb function is not optimal. It dynamically alters the nucleic acid-binding properties of RNA polymerases by stabilizing the initiation complex and destabilizing elongation complexes. Seems to translocate with the RNA polymerase following initiation and acts by binding to the non template strand of the transcription bubble in elongation complexes. The sequence is that of Transcription factor E from Caldivirga maquilingensis (strain ATCC 700844 / DSM 13496 / JCM 10307 / IC-167).